The chain runs to 244 residues: Geranylgeranylglyceryl phosphate synthase (244 aa).

Aspartate 20 and serine 49 together coordinate Mg(2+). Residues 169 to 175 (YLEAGSG), 200 to 201 (GG), and 222 to 223 (GT) contribute to the sn-glycerol 1-phosphate site.

It belongs to the GGGP/HepGP synthase family. Group II subfamily. It depends on Mg(2+) as a cofactor.

The protein resides in the cytoplasm. The catalysed reaction is sn-glycerol 1-phosphate + (2E,6E,10E)-geranylgeranyl diphosphate = sn-3-O-(geranylgeranyl)glycerol 1-phosphate + diphosphate. It functions in the pathway membrane lipid metabolism; glycerophospholipid metabolism. In terms of biological role, prenyltransferase that catalyzes the transfer of the geranylgeranyl moiety of geranylgeranyl diphosphate (GGPP) to the C3 hydroxyl of sn-glycerol-1-phosphate (G1P). This reaction is the first ether-bond-formation step in the biosynthesis of archaeal membrane lipids. The sequence is that of Geranylgeranylglyceryl phosphate synthase from Korarchaeum cryptofilum (strain OPF8).